The sequence spans 439 residues: Probable non-inhibitory serpin-Z9 (439 aa).

The disordered stretch occupies residues Arg12–Pro44. The segment covering Ala31–Pro44 has biased composition (pro residues). The segment at Gly389 to Pro413 is RCL.

The protein belongs to the serpin family.

This Oryza sativa subsp. japonica (Rice) protein is Probable non-inhibitory serpin-Z9.